The primary structure comprises 348 residues: Probable WRKY transcription factor 27 (348 aa).

Disordered stretches follow at residues 19–52 (VSTT…ASSS), 67–90 (TTTT…SPSP), 133–153 (LLQQ…QQKR), and 218–320 (GEHT…LIPN). Residues 75-85 (SPPPLLPPPKA) show a composition bias toward pro residues. The segment covering 133–142 (LLQQQSQPPL) has biased composition (low complexity). Residues 143-153 (RSRKRKNQQKR) are compositionally biased toward basic residues. The WRKY DNA-binding region spans 159-225 (TQENLSSDLW…YTGEHTHPRP (67 aa)). A compositionally biased stretch (polar residues) spans 228–242 (RNSLAGSTRNKSQPV). Residues 274-315 (DVQETNGDEDMVGQEVNMEEEEEEEEVEEDDEEEEDDDDVDD) are compositionally biased toward acidic residues.

It belongs to the WRKY group II-e family.

The protein resides in the nucleus. Functionally, transcription factor. Interacts specifically with the W box (5'-(T)TGAC[CT]-3'), a frequently occurring elicitor-responsive cis-acting element. The protein is Probable WRKY transcription factor 27 (WRKY27) of Arabidopsis thaliana (Mouse-ear cress).